Consider the following 158-residue polypeptide: MLRVGIGYDVHALVAGRPLILAGIDIPHEKGLLGHSDADVLTHTLMDALLGALALGDLGKHFPDTDERYRGISSMKLLEQVMKLLEERGYAIGNIDCIIAAQRPKLAPYIPQMRENLARALKTDLENVSVKATTTERLGFEGREEGISSQAIVCLVKV.

A divalent metal cation is bound by residues Asp-9 and His-11. 4-CDP-2-C-methyl-D-erythritol 2-phosphate-binding positions include 9 to 11 and 35 to 36; these read DVH and HS. Position 43 (His-43) interacts with a divalent metal cation. 4-CDP-2-C-methyl-D-erythritol 2-phosphate-binding positions include 57-59, 62-66, 133-136, Phe-140, and Arg-143; these read DLG, FPDTD, and TTTE.

The protein belongs to the IspF family. Homotrimer. Requires a divalent metal cation as cofactor.

It catalyses the reaction 4-CDP-2-C-methyl-D-erythritol 2-phosphate = 2-C-methyl-D-erythritol 2,4-cyclic diphosphate + CMP. It functions in the pathway isoprenoid biosynthesis; isopentenyl diphosphate biosynthesis via DXP pathway; isopentenyl diphosphate from 1-deoxy-D-xylulose 5-phosphate: step 4/6. Involved in the biosynthesis of isopentenyl diphosphate (IPP) and dimethylallyl diphosphate (DMAPP), two major building blocks of isoprenoid compounds. Catalyzes the conversion of 4-diphosphocytidyl-2-C-methyl-D-erythritol 2-phosphate (CDP-ME2P) to 2-C-methyl-D-erythritol 2,4-cyclodiphosphate (ME-CPP) with a corresponding release of cytidine 5-monophosphate (CMP). The sequence is that of 2-C-methyl-D-erythritol 2,4-cyclodiphosphate synthase from Desulfitobacterium hafniense (strain DSM 10664 / DCB-2).